The following is a 1355-amino-acid chain: NACHT, LRR and PYD domains-containing protein 1 homolog (1355 aa).

In terms of domain architecture, NACHT spans 257–458; the sequence is KTVILCGDSG…SVPLLCWMVC (202 aa). 263–270 contacts ATP; the sequence is GDSGRGKS. Residues 977 to 1109 are ZU5; sequence DSDQWVQVEP…FHAKILQPMF (133 aa). One can recognise an FIIND domain in the interval 977–1252; the sequence is DSDQWVQVEP…NKTESDLFQS (276 aa). A UPA region spans residues 1110–1252; the sequence is SPKTVLVKLG…NKTESDLFQS (143 aa). The CARD domain maps to 1278–1354; sequence LIKSVENVDT…NLLNHLPSSD (77 aa).

The protein belongs to the NLRP family. As to quaternary structure, interacts with the C-terminal part of nlrp1 (NACHT, LRR and PYD domains-containing protein 1, C-terminus) in absence of pathogens and other damage-associated signals. Interacts with the N-terminal part of nlrp1 (NACHT, LRR and PYD domains-containing protein 1, N-terminus) in absence of pathogens and other damage-associated signals. Homomultimer; forms the nlrp1 inflammasome polymeric complex, a filament composed of homopolymers of this form in response to pathogens and other damage-associated signals. The nlrp1 inflammasome polymeric complex associates with pycard/asc. Interacts (via CARD domain) with pycard/asc (via CARD domain); leading to pro-inflammatory caspases (caspa and/or caspb) recruitment. Pro-caspase-a and pro-caspase-b filament formation increases local enzyme concentration, resulting in trans-autocleavage and activation. Active caspa and caspb then processes il1b and il18 precursors, leading to the release of mature cytokines in the extracellular milieu and inflammatory response. In terms of processing, autocatalytically cleaved. Autocatalytic cleavage in FIIND region occurs constitutively, prior to activation signals, and is required for inflammasome activity (IL1B release), possibly by facilitating pro-inflammatory caspases (caspa and/or caspb) binding. Both N- and C-terminal parts remain associated non-covalently. Post-translationally, ubiquitinated in response to pathogen-associated signals, leading to its degradation by the proteasome and subsequent release of the cleaved C-terminal part of the protein (NACHT, LRR and PYD domains-containing protein 1, C-terminus), which polymerizes and forms the nlrp1 inflammasome. As to expression, expressed in adult spleen, head kidney, gill and skin and also in the embryo.

Its subcellular location is the cytoplasm. The protein resides in the inflammasome. Nlrp1 inflammasome is activated by pathogens and other damage-associated signals: activation promotes ubiquitination and degradation of the N-terminal part, releasing the cleaved C-terminal part of the protein (NACHT, LRR and PYD domains-containing protein 1, C-terminus), which polymerizes and forms the nlrp1 inflammasome. Its function is as follows. Acts as the sensor component of the nlrp1 inflammasome, which mediates inflammasome activation in response to various pathogen-associated signals, leading to subsequent pyroptosis. Inflammasomes are supramolecular complexes that assemble in the cytosol in response to pathogens and other damage-associated signals and play critical roles in innate immunity and inflammation. Acts as a recognition receptor (PRR): recognizes specific pathogens and other damage-associated signals, and mediates the formation of the inflammasome polymeric complex. In response to pathogen-associated signals, the N-terminal part of nlrp1 is degraded by the proteasome, releasing the cleaved C-terminal part of the protein (NACHT, LRR and PYD domains-containing protein 1, C-terminus), which polymerizes to initiate the formation of the inflammasome complex: the inflammasome recruits and activate pro-inflammatory caspases (caspa and/or caspb), leading to pyroptosis. In terms of biological role, constitutes the precursor of the nlrp1 inflammasome, which mediates autoproteolytic processing within the FIIND domain to generate the N-terminal and C-terminal parts, which are associated non-covalently in absence of pathogens and other damage-associated signals. Regulatory part that prevents formation of the nlrp1 inflammasome: in absence of pathogens and other damage-associated signals, interacts with the C-terminal part of nlrp1 (NACHT, LRR and PYD domains-containing protein 1, C-terminus), preventing activation of the nlrp1 inflammasome. In response to pathogen-associated signals, this part is ubiquitinated and degraded by the proteasome, releasing the cleaved C-terminal part of the protein, which polymerizes and forms the nlrp1 inflammasome. Functionally, constitutes the active part of the nlrp1 inflammasome. In absence of pathogens and other damage-associated signals, interacts with the N-terminal part of nlrp1 (NACHT, LRR and PYD domains-containing protein 1, N-terminus), preventing activation of the nlrp1 inflammasome. In response to pathogen-associated signals, the N-terminal part of nlrp1 is degraded by the proteasome, releasing this form, which polymerizes to form the nlrp1 inflammasome complex: the nlrp1 inflammasome complex then directly recruits and activates pro-inflammatory caspases (caspa and/or caspb) activation, leading to subsequent pyroptosis. This Danio rerio (Zebrafish) protein is NACHT, LRR and PYD domains-containing protein 1 homolog.